A 156-amino-acid chain; its full sequence is 6,7-dimethyl-8-ribityllumazine synthase (156 aa).

Residues Phe-23, 57–59 (AYE), and 81–83 (AII) contribute to the 5-amino-6-(D-ribitylamino)uracil site. Residue 86 to 87 (GT) coordinates (2S)-2-hydroxy-3-oxobutyl phosphate. Residue His-89 is the Proton donor of the active site. Residue Phe-114 participates in 5-amino-6-(D-ribitylamino)uracil binding. Residue Arg-128 participates in (2S)-2-hydroxy-3-oxobutyl phosphate binding.

The protein belongs to the DMRL synthase family.

The catalysed reaction is (2S)-2-hydroxy-3-oxobutyl phosphate + 5-amino-6-(D-ribitylamino)uracil = 6,7-dimethyl-8-(1-D-ribityl)lumazine + phosphate + 2 H2O + H(+). It functions in the pathway cofactor biosynthesis; riboflavin biosynthesis; riboflavin from 2-hydroxy-3-oxobutyl phosphate and 5-amino-6-(D-ribitylamino)uracil: step 1/2. In terms of biological role, catalyzes the formation of 6,7-dimethyl-8-ribityllumazine by condensation of 5-amino-6-(D-ribitylamino)uracil with 3,4-dihydroxy-2-butanone 4-phosphate. This is the penultimate step in the biosynthesis of riboflavin. This is 6,7-dimethyl-8-ribityllumazine synthase from Helicobacter pylori (strain Shi470).